Consider the following 1070-residue polypeptide: MLRDGNEGMSTIPGFNQIQFEGFCRFIDQGLTEELHKFPKIEDTDQEIEFQLFVETYQLVEPLIKERDAVYESLTYSSELYVPAGLIWKTSRDMQEQTVFIGNIPLMNSLGTSIVNGIYRIVINQILQSPGIYYRSELDHNGISVYTGTIISDWGGRSELEIDRKARIWARVSRKQKISILVPSSAMGSNLREILDNVCYPEIFLSFPNDKEKKKFGSKENAILEFYQQFACVGGDPIFSESLCKELQKKFFQQRCELGRIGRRNMNRRLNLDIPQNNIFLLPRDVLAAADHLIGMKFGMGTLDDMNHLKNKRIRSVADLLQDQFGLALVRLENVVRGTICGAIRHKLIPTPHNLVTSTPLTTTYESFFGLHPLSQVLDRTNPLTQIVHGRKSSYLGPGGLTGRTASFRIRDIHPSHYGRICPIDTSEGINVGLIGSLAIHARIGHWGSIESPFYEIYERSKEVQMVYLSPSRDEYYMVAAGNSLALNQGIQEEQVVPARYRQEFLTIAWEQIHLRSIFPFQYFSIGASLIPFIEHNDANRALMSSNMQRQAVPLSRSEKCIVGTGLEHQAALDSGVSVIAEHEGKIIYTETNKIVFSGNGDTISIPLVMYQRSNKNTCMHQNPQVQRGKCIKKGQILAGGASTVGGELALGKNILVAYMPWEGYNSEDAVLISERLVYGDIYTSFHIRKYEIKTHVTSQGPERITKEIPHLEANLLRNLDKNGIVMLGSWIETGDILVGKLTPQTAKESSYAPEDRLLRAILGIQVSTTRETCLKLPIGGRGRVIDVRWIQKKGGSSYNPETIRVYISQKREIKVGDKVAGRHGNKGIISKILPRQDMPYLQDGRPVDMVFNPLGVPSRMNVGQIFECSLGLAGDLLDRHYRIAPFDERYEQEASRKLVFPELYEASKQTANPWVFEPEYPGKSRIFDGRTGDPFEQPVIMGKSYILKLIHQVDDKIHGRSSGHYALVTQQPLRGRAKQGGQRVGEMEVWALEGFGVAHISQEMLTYKSDHIRARQEVLGTTIIGGTILNPEDAPESFRLLIRELRSLALELNHFLVSEKNFQINRKEA.

This sequence belongs to the RNA polymerase beta chain family. In plastids the minimal PEP RNA polymerase catalytic core is composed of four subunits: alpha, beta, beta', and beta''. When a (nuclear-encoded) sigma factor is associated with the core the holoenzyme is formed, which can initiate transcription.

The protein localises to the plastid. Its subcellular location is the chloroplast. The catalysed reaction is RNA(n) + a ribonucleoside 5'-triphosphate = RNA(n+1) + diphosphate. DNA-dependent RNA polymerase catalyzes the transcription of DNA into RNA using the four ribonucleoside triphosphates as substrates. The sequence is that of DNA-directed RNA polymerase subunit beta from Chloranthus spicatus (Chulantree).